The primary structure comprises 341 residues: Glucokinase (341 aa).

Residue 18–23 (GDIGGT) coordinates ATP.

The protein belongs to the bacterial glucokinase family.

The protein resides in the cytoplasm. The catalysed reaction is D-glucose + ATP = D-glucose 6-phosphate + ADP + H(+). This is Glucokinase from Rhizobium leguminosarum bv. trifolii (strain WSM2304).